We begin with the raw amino-acid sequence, 95 residues long: FXYD domain-containing ion transport regulator 6 (95 aa).

The N-terminal stretch at 1 to 18 is a signal peptide; that stretch reads MELVLVFLCSLLAPTVLA. Residues 19–35 are Extracellular-facing; that stretch reads SAAEKEKEMDPFHYDYQ. The helical transmembrane segment at 36–58 threads the bilayer; it reads TLRIGGLVFAVVLFSVGILLILS. The Cytoplasmic segment spans residues 59–95; sequence RRCKCSFNQKPRAPGDEEAQVENLITANATEPQKAEN.

This sequence belongs to the FXYD family. Regulatory subunit of the sodium/potassium-transporting ATPase which is composed of a catalytic alpha subunit, a non-catalytic beta subunit and an additional regulatory subunit. The regulatory subunit, a member of the FXYD protein family, modulates the enzymatic activity in a tissue- and isoform-specific way by changing affinities of the Na+/K+-ATPase toward Na(+), K(+) or ATP.

Its subcellular location is the cell membrane. Its function is as follows. Associates with and regulates the activity of the sodium/potassium-transporting ATPase (NKA) which catalyzes the hydrolysis of ATP coupled with the exchange of Na(+) and K(+) ions across the plasma membrane. Reduces the apparent affinity for intracellular Na(+) with no change in the apparent affinity for extracellular K(+). In addition to modulating NKA kinetics, may also function as a regulator of NKA localization to the plasma membrane. In Pongo abelii (Sumatran orangutan), this protein is FXYD domain-containing ion transport regulator 6 (FXYD6).